We begin with the raw amino-acid sequence, 123 residues long: Small ribosomal subunit protein uS12 (123 aa).

The residue at position 89 (Asp89) is a 3-methylthioaspartic acid.

This sequence belongs to the universal ribosomal protein uS12 family. In terms of assembly, part of the 30S ribosomal subunit. Contacts proteins S8 and S17. May interact with IF1 in the 30S initiation complex.

Its function is as follows. With S4 and S5 plays an important role in translational accuracy. Interacts with and stabilizes bases of the 16S rRNA that are involved in tRNA selection in the A site and with the mRNA backbone. Located at the interface of the 30S and 50S subunits, it traverses the body of the 30S subunit contacting proteins on the other side and probably holding the rRNA structure together. The combined cluster of proteins S8, S12 and S17 appears to hold together the shoulder and platform of the 30S subunit. This chain is Small ribosomal subunit protein uS12, found in Caulobacter vibrioides (strain ATCC 19089 / CIP 103742 / CB 15) (Caulobacter crescentus).